Reading from the N-terminus, the 25-residue chain is Unknown protein 7 (25 aa).

A disordered region spans residues 1–25 (MENGKVHVASMSGLSMPHMNEMLEK).

This Pseudotsuga menziesii (Douglas-fir) protein is Unknown protein 7.